The sequence spans 184 residues: ATP synthase subunit b, chloroplastic (184 aa).

The chain crosses the membrane as a helical span at residues 27 to 49 (LATNLINLSVVLGVLIFFGKGVL).

Belongs to the ATPase B chain family. In terms of assembly, F-type ATPases have 2 components, F(1) - the catalytic core - and F(0) - the membrane proton channel. F(1) has five subunits: alpha(3), beta(3), gamma(1), delta(1), epsilon(1). F(0) has four main subunits: a(1), b(1), b'(1) and c(10-14). The alpha and beta chains form an alternating ring which encloses part of the gamma chain. F(1) is attached to F(0) by a central stalk formed by the gamma and epsilon chains, while a peripheral stalk is formed by the delta, b and b' chains.

The protein localises to the plastid. The protein resides in the chloroplast thylakoid membrane. In terms of biological role, f(1)F(0) ATP synthase produces ATP from ADP in the presence of a proton or sodium gradient. F-type ATPases consist of two structural domains, F(1) containing the extramembraneous catalytic core and F(0) containing the membrane proton channel, linked together by a central stalk and a peripheral stalk. During catalysis, ATP synthesis in the catalytic domain of F(1) is coupled via a rotary mechanism of the central stalk subunits to proton translocation. Functionally, component of the F(0) channel, it forms part of the peripheral stalk, linking F(1) to F(0). The polypeptide is ATP synthase subunit b, chloroplastic (Lactuca sativa (Garden lettuce)).